Here is a 510-residue protein sequence, read N- to C-terminus: MSRELVIVLDFGGQYSRLIARRIREHNVYCEIYPYNISINKLKQLSPAAIVLSGGPSSVYQEGSPDLDTEIFEIGIPVLGICYGMQLMAKKLGGTVTGSTKREYGKALLEIENPNLLTEGVSSDLLVWMSHGDSVEQVPPGFKVMGKTENTPIAGLFNPDKNLYGVQFHLEVMHTPKGREMLKNFLFNIADLSADWTMGSYIEETVEQIKTEAQGRKAVCGLSGGIDSTVAALLVQKAIGDDLTCIFVNHGLLRKNEQDQVRELFEQEFDINLVYVDASDRFLNKLQGVTDPEQKRKIIGEEFIRVFEEEARKIGDVDFLVQGTLYTDVVESGTETASVIKSHHNVGGLPEKMDLSLIEPLNSLFKDEVRQVARELGLHREIVERHPFPGPGLAIRVLGEITKEKLDILREADAVVSDELKKIGLYHDIWQLFTVLPDIKTVGVKGDERSYDYPIILRAVNSEDGMTADWYRFSNDVLERLSNRVVNEVDGVNRFIYDITSKPPATIEWE.

The Glutamine amidotransferase type-1 domain maps to 5-195; the sequence is LVIVLDFGGQ…LFNIADLSAD (191 aa). C82 functions as the Nucleophile in the catalytic mechanism. Active-site residues include H169 and E171. One can recognise a GMPS ATP-PPase domain in the interval 196-385; the sequence is WTMGSYIEET…LGLHREIVER (190 aa). ATP is bound at residue 223-229; it reads SGGIDST.

As to quaternary structure, homodimer.

The catalysed reaction is XMP + L-glutamine + ATP + H2O = GMP + L-glutamate + AMP + diphosphate + 2 H(+). It participates in purine metabolism; GMP biosynthesis; GMP from XMP (L-Gln route): step 1/1. Catalyzes the synthesis of GMP from XMP. The polypeptide is GMP synthase [glutamine-hydrolyzing] (Natranaerobius thermophilus (strain ATCC BAA-1301 / DSM 18059 / JW/NM-WN-LF)).